We begin with the raw amino-acid sequence, 336 residues long: Malate dehydrogenase, cytoplasmic (336 aa).

NAD(+) contacts are provided by residues 11 to 17 and aspartate 42; that span reads GAAGQIG. Residues arginine 92 and arginine 98 each coordinate substrate. Residues asparagine 105, glutamine 112, and 129–131 contribute to the NAD(+) site; that span reads VGN. The substrate site is built by asparagine 131 and arginine 163. Histidine 188 functions as the Proton acceptor in the catalytic mechanism.

The protein belongs to the LDH/MDH superfamily. MDH type 2 family. Homodimer.

The protein localises to the cytoplasm. The enzyme catalyses (S)-malate + NAD(+) = oxaloacetate + NADH + H(+). Its function is as follows. Catalyzes the reversible conversion of (S)-malate to oxaloacetate in the cytoplasm where oxaloacetate is used for gluconeogenesis. This is Malate dehydrogenase, cytoplasmic from Caenorhabditis elegans.